Reading from the N-terminus, the 635-residue chain is Threonine--tRNA ligase (635 aa).

One can recognise a TGS domain in the interval 1–61 (MVSIRLPDGS…DRDASLAIVT (61 aa)). Positions 242–533 (DHRKLGKQLD…LIEHHAGAMP (292 aa)) are catalytic. 3 residues coordinate Zn(2+): Cys333, His384, and His510.

This sequence belongs to the class-II aminoacyl-tRNA synthetase family. Homodimer. Requires Zn(2+) as cofactor.

The protein resides in the cytoplasm. The enzyme catalyses tRNA(Thr) + L-threonine + ATP = L-threonyl-tRNA(Thr) + AMP + diphosphate + H(+). Its function is as follows. Catalyzes the attachment of threonine to tRNA(Thr) in a two-step reaction: L-threonine is first activated by ATP to form Thr-AMP and then transferred to the acceptor end of tRNA(Thr). Also edits incorrectly charged L-seryl-tRNA(Thr). The protein is Threonine--tRNA ligase of Burkholderia pseudomallei (strain 1106a).